A 370-amino-acid chain; its full sequence is Protein-tyrosine sulfotransferase 1 (370 aa).

Over 1 to 8 (MVGKLKQN) the chain is Cytoplasmic. The chain crosses the membrane as a helical; Signal-anchor for type II membrane protein span at residues 9 to 25 (LLLACLVISSVTVFYLG). At 26–370 (QHAMECHHRI…KEKPQTEQVE (345 aa)) the chain is on the lumenal side. Asparagine 60 carries N-linked (GlcNAc...) asparagine glycosylation. 79 to 83 (RSGTT) is a binding site for 3'-phosphoadenylyl sulfate. Cysteine 97 and cysteine 157 are oxidised to a cystine. The active-site Proton donor/acceptor is glutamate 100. Residues 102-106 (RVIPR) are interaction with peptide substrate. 3'-phosphoadenylyl sulfate contacts are provided by arginine 184, serine 192, and arginine 196. The cysteines at positions 226 and 234 are disulfide-linked. Tyrosine 239 lines the 3'-phosphoadenylyl sulfate pocket. Asparagine 262 carries N-linked (GlcNAc...) asparagine glycosylation. 3'-phosphoadenylyl sulfate-binding positions include 286–295 (STDQVIKPVN) and lysine 301.

This sequence belongs to the protein sulfotransferase family. In terms of assembly, homodimer. Can also form heterodimers with TPST2. N-glycosylated.

It localises to the golgi apparatus membrane. It catalyses the reaction L-tyrosyl-[protein] + 3'-phosphoadenylyl sulfate = O-sulfo-L-tyrosine-[protein] + adenosine 3',5'-bisphosphate + H(+). Catalyzes the O-sulfation of tyrosine residues within acidic motifs of polypeptides, using 3'-phosphoadenylyl sulfate (PAPS) as cosubstrate. The chain is Protein-tyrosine sulfotransferase 1 (Tpst1) from Rattus norvegicus (Rat).